The sequence spans 85 residues: Phosphocarrier protein HPr (85 aa).

The HPr domain occupies 1 to 85 (MYEKQVEITA…HLVALMDQLH (85 aa)). His-15 functions as the Pros-phosphohistidine intermediate in the catalytic mechanism.

This sequence belongs to the HPr family.

Its subcellular location is the cytoplasm. In terms of biological role, general (non sugar-specific) component of the phosphoenolpyruvate-dependent sugar phosphotransferase system (sugar PTS). This major carbohydrate active-transport system catalyzes the phosphorylation of incoming sugar substrates concomitantly with their translocation across the cell membrane. The phosphoryl group from phosphoenolpyruvate (PEP) is transferred to the phosphoryl carrier protein HPr by enzyme I. Phospho-HPr then transfers it to the PTS EIIA domain. The chain is Phosphocarrier protein HPr (ptsH) from Vibrio cholerae serotype O1 (strain ATCC 39315 / El Tor Inaba N16961).